Here is a 168-residue protein sequence, read N- to C-terminus: MERVTIIGIIFAILVVGWILATGQWAYGNVVGPLVNHSKIPLLKITYVSAYENAKGTYLILNITDCCGPDAYPASAPIMEIYNSTWHVFLYSYNISNDTVKVIQAPWNENKKDYTNWYSGFVVILGSEAQFQLQLPFHLSPGTYHIKLYTPAVSSKVLAKQTATFTIS.

The helical transmembrane segment at 6 to 26 (IIGIIFAILVVGWILATGQWA) threads the bilayer.

Heterodimer of a large and a small subunit in a 2:2 stoichiometry. TQO may associate with the terminal oxidase formed by doxBCE. The N-terminus is blocked. In terms of processing, glycosylated.

Its subcellular location is the cell membrane. The enzyme catalyses 6-decylubiquinone + 2 thiosulfate = 6-decylubiquinol + tetrathionate. Inhibited by sulfite, metabisulfite and dithonite. In terms of biological role, TQO plays a role in sulfur oxidation and is proposed to couple sulfur oxidation to dioxygen reduction; caldariellaquinone or sulfolobus quinone seem to serve to transfer electrons to the electron transport chain terminal oxidase formed by DoxBCE. The chain is Thiosulfate dehydrogenase [quinone] small subunit (doxA) from Acidianus ambivalens (Desulfurolobus ambivalens).